A 116-amino-acid polypeptide reads, in one-letter code: Large ribosomal subunit protein bL17 (116 aa).

It belongs to the bacterial ribosomal protein bL17 family. Part of the 50S ribosomal subunit. Contacts protein L32.

The sequence is that of Large ribosomal subunit protein bL17 from Gloeobacter violaceus (strain ATCC 29082 / PCC 7421).